A 518-amino-acid polypeptide reads, in one-letter code: Membrane-bound lytic murein transglycosylase F (518 aa).

Positions 1-21 (MKKLKINYLFIGILALLLAVA) are cleaved as a signal peptide. The tract at residues 22-269 (LWPSIPWFGK…RIEEKYLGHG (248 aa)) is non-LT domain. Positions 270–518 (DDFDYVDTRT…SRKGSEEKQN (249 aa)) are LT domain. Glutamate 314 is an active-site residue.

It in the N-terminal section; belongs to the bacterial solute-binding protein 3 family. In the C-terminal section; belongs to the transglycosylase Slt family.

The protein localises to the cell outer membrane. The catalysed reaction is Exolytic cleavage of the (1-&gt;4)-beta-glycosidic linkage between N-acetylmuramic acid (MurNAc) and N-acetylglucosamine (GlcNAc) residues in peptidoglycan, from either the reducing or the non-reducing ends of the peptidoglycan chains, with concomitant formation of a 1,6-anhydrobond in the MurNAc residue.. In terms of biological role, murein-degrading enzyme that degrades murein glycan strands and insoluble, high-molecular weight murein sacculi, with the concomitant formation of a 1,6-anhydromuramoyl product. Lytic transglycosylases (LTs) play an integral role in the metabolism of the peptidoglycan (PG) sacculus. Their lytic action creates space within the PG sacculus to allow for its expansion as well as for the insertion of various structures such as secretion systems and flagella. In Escherichia coli (strain ATCC 8739 / DSM 1576 / NBRC 3972 / NCIMB 8545 / WDCM 00012 / Crooks), this protein is Membrane-bound lytic murein transglycosylase F.